The following is a 168-amino-acid chain: Photosystem I assembly protein Ycf3 (168 aa).

TPR repeat units follow at residues 35-68, 72-105, and 120-153; these read AFTY…EIDP, SYIL…NPFL, and GEKA…TPGN.

It belongs to the Ycf3 family.

It localises to the plastid membrane. In terms of biological role, essential for the assembly of the photosystem I (PSI) complex. May act as a chaperone-like factor to guide the assembly of the PSI subunits. The chain is Photosystem I assembly protein Ycf3 from Cuscuta exaltata (Tall dodder).